Reading from the N-terminus, the 263-residue chain is 3-deoxy-manno-octulosonate cytidylyltransferase (263 aa).

This sequence belongs to the KdsB family.

The protein resides in the cytoplasm. The catalysed reaction is 3-deoxy-alpha-D-manno-oct-2-ulosonate + CTP = CMP-3-deoxy-beta-D-manno-octulosonate + diphosphate. Its pathway is nucleotide-sugar biosynthesis; CMP-3-deoxy-D-manno-octulosonate biosynthesis; CMP-3-deoxy-D-manno-octulosonate from 3-deoxy-D-manno-octulosonate and CTP: step 1/1. It participates in bacterial outer membrane biogenesis; lipopolysaccharide biosynthesis. Activates KDO (a required 8-carbon sugar) for incorporation into bacterial lipopolysaccharide in Gram-negative bacteria. This is 3-deoxy-manno-octulosonate cytidylyltransferase from Burkholderia cenocepacia (strain HI2424).